The primary structure comprises 580 residues: Pentatricopeptide repeat-containing protein At5g10690 (580 aa).

9 PPR repeats span residues 76 to 110, 112 to 142, 151 to 181, 189 to 223, 224 to 254, 266 to 296, 302 to 337, 342 to 376, and 382 to 417; these read NTIV…GGIG, DSIS…IEYG, SSSL…YDIL, SVLI…RLEP, DRLT…MKEK, DVVT…MKLC, DRTA…GANE, KPHL…SSGS, and QQEA…KTIP. In terms of domain architecture, CBS spans 486-553; that stretch reads VPIVDDRGSC…IVVHCGNFSG (68 aa).

It belongs to the PPR family. P subfamily.

This is Pentatricopeptide repeat-containing protein At5g10690 (CBSPPR1) from Arabidopsis thaliana (Mouse-ear cress).